A 132-amino-acid polypeptide reads, in one-letter code: Small ribosomal subunit protein uS8 (132 aa).

The protein belongs to the universal ribosomal protein uS8 family. In terms of assembly, part of the 30S ribosomal subunit. Contacts proteins S5 and S12.

In terms of biological role, one of the primary rRNA binding proteins, it binds directly to 16S rRNA central domain where it helps coordinate assembly of the platform of the 30S subunit. This is Small ribosomal subunit protein uS8 from Borrelia garinii subsp. bavariensis (strain ATCC BAA-2496 / DSM 23469 / PBi) (Borreliella bavariensis).